Consider the following 144-residue polypeptide: Mannitol-specific phosphotransferase enzyme IIA component (144 aa).

Positions 3 to 142 constitute a PTS EIIA type-2 domain; it reads ELFSNDNIFL…EEIKQVFEEA (140 aa). Histidine 63 (tele-phosphohistidine intermediate) is an active-site residue. Histidine 63 is modified (phosphohistidine; by HPr).

In terms of assembly, homodimer or homotrimer. Seems to be a monomer when not phosphorylated.

Its subcellular location is the cytoplasm. Functionally, the phosphoenolpyruvate-dependent sugar phosphotransferase system (sugar PTS), a major carbohydrate active transport system, catalyzes the phosphorylation of incoming sugar substrates concomitantly with their translocation across the cell membrane. The enzyme II CmtAB PTS system is involved in D-mannitol transport. This Staphylococcus aureus (strain COL) protein is Mannitol-specific phosphotransferase enzyme IIA component (mtlF).